The primary structure comprises 209 residues: Uracil phosphoribosyltransferase (209 aa).

5-phospho-alpha-D-ribose 1-diphosphate is bound by residues R79, R104, and 131–139 (DPMLATGAS). Residues I194 and 199-201 (GDA) each bind uracil. D200 serves as a coordination point for 5-phospho-alpha-D-ribose 1-diphosphate.

This sequence belongs to the UPRTase family. It depends on Mg(2+) as a cofactor.

The catalysed reaction is UMP + diphosphate = 5-phospho-alpha-D-ribose 1-diphosphate + uracil. Its pathway is pyrimidine metabolism; UMP biosynthesis via salvage pathway; UMP from uracil: step 1/1. With respect to regulation, allosterically activated by GTP. Catalyzes the conversion of uracil and 5-phospho-alpha-D-ribose 1-diphosphate (PRPP) to UMP and diphosphate. This chain is Uracil phosphoribosyltransferase, found in Staphylococcus haemolyticus (strain JCSC1435).